The chain runs to 36 residues: DGANAEATDNKPGVFERDEKKCCWNRACTRLVPCSK.

A propeptide spanning residues 1–21 (DGANAEATDNKPGVFERDEKK) is cleaved from the precursor. 2 disulfide bridges follow: C22-C28 and C23-C34.

This sequence belongs to the conotoxin A superfamily. In terms of tissue distribution, expressed by the venom duct.

It localises to the secreted. This Conus bullatus (Bubble cone) protein is Conotoxin Bu21.